The primary structure comprises 172 residues: 3-hydroxydecanoyl-[acyl-carrier-protein] dehydratase (172 aa).

The active site involves histidine 71.

This sequence belongs to the thioester dehydratase family. FabA subfamily. In terms of assembly, homodimer.

Its subcellular location is the cytoplasm. It carries out the reaction a (3R)-hydroxyacyl-[ACP] = a (2E)-enoyl-[ACP] + H2O. It catalyses the reaction (3R)-hydroxydecanoyl-[ACP] = (2E)-decenoyl-[ACP] + H2O. The enzyme catalyses (2E)-decenoyl-[ACP] = (3Z)-decenoyl-[ACP]. It functions in the pathway lipid metabolism; fatty acid biosynthesis. In terms of biological role, necessary for the introduction of cis unsaturation into fatty acids. Catalyzes the dehydration of (3R)-3-hydroxydecanoyl-ACP to E-(2)-decenoyl-ACP and then its isomerization to Z-(3)-decenoyl-ACP. Can catalyze the dehydratase reaction for beta-hydroxyacyl-ACPs with saturated chain lengths up to 16:0, being most active on intermediate chain length. The protein is 3-hydroxydecanoyl-[acyl-carrier-protein] dehydratase of Brucella ovis (strain ATCC 25840 / 63/290 / NCTC 10512).